A 492-amino-acid chain; its full sequence is N-succinylglutamate 5-semialdehyde dehydrogenase (492 aa).

Residue 220–225 (GSANTG) participates in NAD(+) binding. Catalysis depends on residues Glu243 and Cys277.

Belongs to the aldehyde dehydrogenase family. AstD subfamily.

The catalysed reaction is N-succinyl-L-glutamate 5-semialdehyde + NAD(+) + H2O = N-succinyl-L-glutamate + NADH + 2 H(+). Its pathway is amino-acid degradation; L-arginine degradation via AST pathway; L-glutamate and succinate from L-arginine: step 4/5. Catalyzes the NAD-dependent reduction of succinylglutamate semialdehyde into succinylglutamate. The protein is N-succinylglutamate 5-semialdehyde dehydrogenase of Escherichia coli (strain SE11).